We begin with the raw amino-acid sequence, 88 residues long: Elongation factor 1-beta (88 aa).

The protein belongs to the EF-1-beta/EF-1-delta family.

Functionally, promotes the exchange of GDP for GTP in EF-1-alpha/GDP, thus allowing the regeneration of EF-1-alpha/GTP that could then be used to form the ternary complex EF-1-alpha/GTP/AAtRNA. In Halorubrum lacusprofundi (strain ATCC 49239 / DSM 5036 / JCM 8891 / ACAM 34), this protein is Elongation factor 1-beta.